Consider the following 766-residue polypeptide: Single-minded homolog 1 (766 aa).

The region spanning 1-53 is the bHLH domain; sequence MKEKSKNAARTRREKENSEFYELAKLLPLPSAITSQLDKASIIRLTTSYLKMR. 2 PAS domains span residues 77-147 and 218-288; these read GREL…QPYH and PPSA…LVKG. Residues 292 to 335 enclose the PAC domain; it reads TKYYRFLAKHGGWVWVQSYATIVHNSRSSRPHCIVSVNYVLTDT. Residues 336–766 form the Single-minded C-terminal domain; that stretch reads EYKGLQLSLD…GTSVIITNGS (431 aa). Residues 353-365 show a composition bias toward polar residues; that stretch reads AFSYTSSSTPTMT. Disordered stretches follow at residues 353 to 431, 528 to 563, and 642 to 662; these read AFSY…SQHD, WDED…EPSK, and SPRE…SSPN. The Nuclear localization signal motif lies at 368–387; the sequence is RKGAKSRLSSSKSKSRTSPY. The segment covering 373–385 has biased composition (low complexity); it reads SRLSSSKSKSRTS. A compositionally biased stretch (basic and acidic residues) spans 394-404; the sequence is HTERSESDHDS. Positions 649–662 are enriched in polar residues; sequence DNSPTALSRISSPN.

Efficient DNA binding requires dimerization with another bHLH protein. Heterodimer; forms a heterodimer with ARNT, ARNT2.

The protein resides in the nucleus. In terms of biological role, transcriptional factor that may have pleiotropic effects during embryogenesis and in the adult. This is Single-minded homolog 1 (SIM1) from Pan troglodytes (Chimpanzee).